The primary structure comprises 138 residues: uncharacterized protein (138 aa).

Positions 3–72 (LYSISKAAEK…LEDINEFVKD (70 aa)) constitute an HTH merR-type domain. Positions 6–25 (ISKAAEKTSISSYTLRYYEK) form a DNA-binding region, H-T-H motif.

This is an uncharacterized protein from Bacillus subtilis (strain 168).